The sequence spans 177 residues: GTP-dependent dephospho-CoA kinase (177 aa).

Gly25, Tyr31, Asp48, Val49, Val50, Asp67, Lys69, Glu124, and Asp147 together coordinate GTP.

The protein belongs to the GTP-dependent DPCK family. Monomer in solution.

It carries out the reaction 3'-dephospho-CoA + GTP = GDP + CoA + H(+). It participates in cofactor biosynthesis; coenzyme A biosynthesis. Its function is as follows. Catalyzes the GTP-dependent phosphorylation of the 3'-hydroxyl group of dephosphocoenzyme A to form coenzyme A (CoA). Can also use UTP, with lower efficiency and has weak activity with ATP, but shows a strong preference for GTP as the phosphate donor. The chain is GTP-dependent dephospho-CoA kinase from Thermococcus kodakarensis (strain ATCC BAA-918 / JCM 12380 / KOD1) (Pyrococcus kodakaraensis (strain KOD1)).